Reading from the N-terminus, the 959-residue chain is Bifunctional premutilin synthase (959 aa).

The tract at residues 1 to 542 (MGLSEDLHAR…ALNVPIPRFD (542 aa)) is class II diterpene cyclase. The DXDD motif motif lies at 309–312 (DADM). Catalysis depends on D311, which acts as the For class II diterpene cyclase activity. The segment at 543–959 (PASITTLPPI…TANGSNGIHH (417 aa)) is class I diterpene synthase. The For class I diterpene synthase activity role is filled by D649. The Mg(2+) site is built by D649, D653, and N824. The short motif at 649 to 653 (DDYLD) is the DDXXD motif element. The interval 931–959 (KGANGVKKTNGLTTNGTKATANGSNGIHH) is disordered. Low complexity predominate over residues 934–959 (NGVKKTNGLTTNGTKATANGSNGIHH).

This sequence belongs to the terpene synthase family. Requires Mg(2+) as cofactor.

It participates in secondary metabolite biosynthesis; terpenoid biosynthesis. Its function is as follows. Bifunctional premutilin synthase; part of the gene cluster that mediates the biosynthesis of pleuromutilin, a tricyclic diterpene showing antibacterial properties. The geranylgeranyl diphosphate (GGPP) synthase ple4 catalyzes the first step in pleuromutilin biosynthesis. GGPP is then substrate of the premutilin synthase (PS) ple3 to yield premutilin. Premutilin synthase is a bifunctional enzyme composed of the fusion of a class II diterpene cyclase (DTC) and a class I diterpene synthase (DTS), with the corresponding domains and active sites containing characteristic aspartate-rich motifs. GGPP is first converted to mutildienyl-diphosphate (MPP) at the class II DTC site. MPP is subsequently further cyclized at the class I DTS site, followed by a 1,5-hydride shift and addition of water prior to terminating deprotonation, to yield premutilin. The cytochrome P450 monooxygenases ple5 and ple6 hydroxylate premutilin at C-11 and C-3, respectively, producing 11-hydroxypremutilin and 3-hydroxypremutilin. The combination of the actions of both ple5 and ple6 leads to the production of 3,11-dihydroxypremutilin. The short chain dehydrogenase ple7 further converts 3,11-dihydroxypremutilin into mutilin. The acetyltransferase ple2 then acetylates mutilin to produce 14-O-acetylmutilin. Finally, the cytochrome P450 monooxygenase ple1 catalyzes hydroxylation on the alpha position of the acetyl side chain of 14-O-acetylmutilin to yield pleuromutilin. This Rhodocybe pseudopiperita (Clitopilus pseudopiperitus) protein is Bifunctional premutilin synthase.